The following is a 263-amino-acid chain: Chromosomal replication initiator protein DnaA (263 aa).

Position 1 (D1) is a region of interest, domain I, interacts with DnaA modulators. Position 1 (D1) is a region of interest, domain II. Positions 1-177 are domain III, AAA+ region; it reads DSGLGKTHLL…GIINKIEFSI (177 aa). Residues G3, G5, K6, and T7 each contribute to the ATP site. Residues 178 to 263 are domain IV, binds dsDNA; sequence IQDNSAAPKI…KNYSEIGVAF (86 aa).

This sequence belongs to the DnaA family. Oligomerizes as a right-handed, spiral filament on DNA at oriC.

The protein resides in the cytoplasm. Plays an essential role in the initiation and regulation of chromosomal replication. ATP-DnaA binds to the origin of replication (oriC) to initiate formation of the DNA replication initiation complex once per cell cycle. Binds the DnaA box (a 9 base pair repeat at the origin) and separates the double-stranded (ds)DNA. Forms a right-handed helical filament on oriC DNA; dsDNA binds to the exterior of the filament while single-stranded (ss)DNA is stabiized in the filament's interior. The ATP-DnaA-oriC complex binds and stabilizes one strand of the AT-rich DNA unwinding element (DUE), permitting loading of DNA polymerase. After initiation quickly degrades to an ADP-DnaA complex that is not apt for DNA replication. Binds acidic phospholipids. The protein is Chromosomal replication initiator protein DnaA of Spiroplasma apis.